The chain runs to 192 residues: MSTIWIAIAALSALALAFGLVLGYASRRFEVENDPIVEEVEAMLPQSQCGQCGYPGCRPYAEAVALNGENINKCGPGGEAMMLKLAEKLNVDPQPLEGDADVQAPARQVAWIDESNCIGCTKCIQACPVDAIIGSTKAVHTVVSDLCTGCDLCVAPCPTDCIELRPIAPTPANWKWDLDTIPVRVIQVERHA.

Residues 1 to 26 form a hydrophobic region; it reads MSTIWIAIAALSALALAFGLVLGYAS. The 4Fe-4S domain maps to 32 to 91; that stretch reads ENDPIVEEVEAMLPQSQCGQCGYPGCRPYAEAVALNGENINKCGPGGEAMMLKLAEKLNV. The [4Fe-4S] cluster site is built by Cys49, Cys52, Cys57, Cys74, Cys117, Cys120, Cys123, Cys127, Cys147, Cys150, Cys153, and Cys157. 4Fe-4S ferredoxin-type domains follow at residues 108–137 and 138–167; these read QVAW…GSTK and AVHT…LRPI.

Belongs to the 4Fe4S bacterial-type ferredoxin family. RnfB subfamily. As to quaternary structure, the complex is composed of six subunits: RnfA, RnfB, RnfC, RnfD, RnfE and RnfG. [4Fe-4S] cluster is required as a cofactor.

Its subcellular location is the cell inner membrane. Functionally, part of a membrane-bound complex that couples electron transfer with translocation of ions across the membrane. The sequence is that of Ion-translocating oxidoreductase complex subunit B from Pectobacterium carotovorum subsp. carotovorum (strain PC1).